A 461-amino-acid polypeptide reads, in one-letter code: Cysteine--tRNA ligase (461 aa).

Cysteine 28 is a Zn(2+) binding site. A 'HIGH' region motif is present at residues 30–40 (ITVYDLCHIGH). Positions 209, 234, and 238 each coordinate Zn(2+). Positions 266-270 (KMSKS) match the 'KMSKS' region motif. ATP is bound at residue lysine 269.

The protein belongs to the class-I aminoacyl-tRNA synthetase family. In terms of assembly, monomer. It depends on Zn(2+) as a cofactor.

It localises to the cytoplasm. It carries out the reaction tRNA(Cys) + L-cysteine + ATP = L-cysteinyl-tRNA(Cys) + AMP + diphosphate. This chain is Cysteine--tRNA ligase, found in Escherichia coli O6:K15:H31 (strain 536 / UPEC).